The chain runs to 596 residues: Merlin (596 aa).

A Phosphoserine modification is found at serine 13. The region spanning 22-311 (FTVRIVTMDA…GNHDLFMRRR (290 aa)) is the FERM domain. Serine 518 carries the phosphoserine; by PAK modification. The interval 560-580 (VLHSESSDRGGPSSKHNTIKK) is disordered.

Interacts with NHERF1, HGS and AGAP2. Interacts with SGSM3. Interacts (via FERM domain) with MPP1. Interacts with LAYN. Interacts with WWC1. Interacts with the CUL4A-RBX1-DDB1-VprBP/DCAF1 E3 ubiquitin-protein ligase complex. The unphosphorylated form interacts (via FERM domain) with VPRBP/DCAF1. Interacts (via FERM domain) with NOP53; the interaction is direct. Interacts with SCHIP1; the interaction is direct. Post-translationally, phosphorylation of Ser-518 inhibits nuclear localization by disrupting the intramolecular association of the FERM domain with the C-terminal tail. The dephosphorylation of Ser-518 favors the interaction with NOP53. In terms of processing, ubiquitinated by the CUL4A-RBX1-DDB1-DCAF1/VprBP E3 ubiquitin-protein ligase complex for ubiquitination and subsequent proteasome-dependent degradation.

The protein localises to the cell membrane. The protein resides in the cell projection. It is found in the cytoplasm. It localises to the cytoskeleton. Its subcellular location is the nucleus. Functionally, probable regulator of the Hippo/SWH (Sav/Wts/Hpo) signaling pathway, a signaling pathway that plays a pivotal role in tumor suppression by restricting proliferation and promoting apoptosis. Along with WWC1 can synergistically induce the phosphorylation of LATS1 and LATS2 and can probably function in the regulation of the Hippo/SWH (Sav/Wts/Hpo) signaling pathway. May act as a membrane stabilizing protein. May inhibit PI3 kinase by binding to AGAP2 and impairing its stimulating activity. Suppresses cell proliferation and tumorigenesis by inhibiting the CUL4A-RBX1-DDB1-VprBP/DCAF1 E3 ubiquitin-protein ligase complex. Plays a role in lens development and is required for complete fiber cell terminal differentiation, maintenance of cell polarity and separation of the lens vesicle from the corneal epithelium. This chain is Merlin (Nf2), found in Mus musculus (Mouse).